The sequence spans 217 residues: 3-oxoadipate CoA-transferase subunit B (217 aa).

The active site involves Glu-50.

Belongs to the 3-oxoacid CoA-transferase subunit B family. In terms of assembly, heterodimer.

The catalysed reaction is 3-oxoadipate + succinyl-CoA = 3-oxoadipyl-CoA + succinate. Its pathway is aromatic compound metabolism; beta-ketoadipate pathway; acetyl-CoA and succinyl-CoA from 3-oxoadipate: step 1/2. This chain is 3-oxoadipate CoA-transferase subunit B (pcaJ), found in Acinetobacter baylyi (strain ATCC 33305 / BD413 / ADP1).